A 259-amino-acid chain; its full sequence is 5'-nucleotidase SurE (259 aa).

A divalent metal cation is bound by residues D8, D9, S40, and N92.

The protein belongs to the SurE nucleotidase family. A divalent metal cation is required as a cofactor.

The protein localises to the cytoplasm. It carries out the reaction a ribonucleoside 5'-phosphate + H2O = a ribonucleoside + phosphate. Nucleotidase that shows phosphatase activity on nucleoside 5'-monophosphates. This Xanthomonas campestris pv. campestris (strain 8004) protein is 5'-nucleotidase SurE.